The primary structure comprises 426 residues: 26S proteasome regulatory subunit 7B (426 aa).

209-216 serves as a coordination point for ATP; the sequence is GPPGTGKT.

Belongs to the AAA ATPase family.

Its subcellular location is the cytoplasm. It localises to the nucleus. The 26S proteasome is involved in the ATP-dependent degradation of ubiquitinated proteins. The regulatory (or ATPase) complex confers ATP dependency and substrate specificity to the 26S complex. The chain is 26S proteasome regulatory subunit 7B (RPT1B) from Oryza sativa subsp. japonica (Rice).